The sequence spans 1487 residues: Secretory phospholipase A2 receptor (1487 aa).

The N-terminal stretch at 1–26 (MVQWLAMLQLLWLQQLLLLGIHQGIA) is a signal peptide. Residues 27–1396 (QDLTHIQEPS…AQPEKGLSHS (1370 aa)) lie on the Extracellular side of the membrane. The region spanning 42–165 (KGIFIIQSES…SSGGDICEHP (124 aa)) is the Ricin B-type lectin domain. Intrachain disulfides connect Cys-55-Cys-68, Cys-93-Cys-110, Cys-181-Cys-207, and Cys-195-Cys-222. A glycan (N-linked (GlcNAc...) asparagine) is linked at Asn-97. The region spanning 176-224 (AHGMPCVFPFQFKGHWHHDCIREGQKEHLLWCATTSRYEEDEKWGFCPD) is the Fibronectin type-II domain. Residue Asn-239 is glycosylated (N-linked (GlcNAc...) asparagine). 6 consecutive C-type lectin domains span residues 241–357 (SSRI…YICK), 387–504 (FNRK…YICK), 524–643 (HGRF…MSLC), 673–797 (GLAS…WICR), 819–938 (YQNA…SICK), and 964–1095 (FNYK…GFVC). 10 cysteine pairs are disulfide-bonded: Cys-263-Cys-356, Cys-333-Cys-348, Cys-408-Cys-503, Cys-480-Cys-495, Cys-617-Cys-634, Cys-699-Cys-796, Cys-774-Cys-788, Cys-840-Cys-937, Cys-914-Cys-929, and Cys-1066-Cys-1086. N-linked (GlcNAc...) asparagine glycosylation is present at Asn-928. Residues Asn-1107, Asn-1122, and Asn-1131 are each glycosylated (N-linked (GlcNAc...) asparagine). C-type lectin domains follow at residues 1120–1231 (YGNR…GAIC) and 1256–1377 (FKGN…FICK). 3 cysteine pairs are disulfide-bonded: Cys-1208-Cys-1222, Cys-1279-Cys-1376, and Cys-1353-Cys-1368. The helical transmembrane segment at 1397-1417 (IVPVTVTLTLIIALGIFMLCF) threads the bilayer. Topologically, residues 1418-1487 (WIYKQKSDIF…HKGRPICISP (70 aa)) are cytoplasmic. The Endocytosis signal motif lies at 1435-1441 (GSYYPTL). Positions 1463 to 1475 (DEEVRDAPATESK) are enriched in basic and acidic residues. The interval 1463–1487 (DEEVRDAPATESKRGHKGRPICISP) is disordered.

Interacts with sPLA2-IB/PLA2G1B; this interaction mediates intracellular signaling as well as clearance of extracellular sPLA2-IB/PLA2G1B via endocytotic pathway. Interacts with sPLA2-X/PLA2G10; this interaction mediates sPLA2-X/PLA2G10 clearance and inactivation. In terms of processing, the secretory phospholipase A2 receptor form may be produced by the action of metalloproteinases. It contains all extracellular domains and only lacks transmembrane and cytosolic regions. It is however unclear whether this form is produced by proteolytic cleavage as suggested by some experiments reported by PubMed:11830583, or by alternative splicing. As to expression, widely expressed. Present in type II alveolar epithelial cells and a subset of splenic lymphocytes. Present at the surface of polymorphonuclear neutrophils (at protein level).

The protein resides in the cell membrane. The protein localises to the secreted. In terms of biological role, receptor for secretory phospholipase A2 (sPLA2). Acts as a receptor for phospholipases sPLA2-IB/PLA2G1B, sPLA2-X/PLA2G10 and, with lower affinity, sPLA2-IIA/PLA2G2A. Also able to bind to snake PA2-like toxins. Although its precise function remains unclear, binding of sPLA2 to its receptor participates in both positive and negative regulation of sPLA2 functions as well as clearance of sPLA2. Binding of sPLA2-IB/PLA2G1B induces various effects depending on the cell type, such as activation of the mitogen-activated protein kinase (MAPK) cascade to induce cell proliferation, the production of lipid mediators, selective release of arachidonic acid in bone marrow-derived mast cells. In neutrophils, binding of sPLA2-IB/PLA2G1B can activate p38 MAPK to stimulate elastase release and cell adhesion. May be involved in responses in pro-inflammatory cytokine productions during endotoxic shock. Also has endocytic properties and rapidly internalizes sPLA2 ligands, which is particularly important for the clearance of extracellular sPLA2s to protect their potent enzymatic activities. The soluble secretory phospholipase A2 receptor form is circulating and acts as a negative regulator of sPLA2 functions by blocking the biological functions of sPLA2-IB/PLA2G1B and sPLA2-X/PLA2G10. In podocytes, binding of sPLA2-IB/PLA2G1B can regulate podocyte survival and glomerular homeostasis. This chain is Secretory phospholipase A2 receptor (Pla2r1), found in Mus musculus (Mouse).